A 530-amino-acid polypeptide reads, in one-letter code: Tetrahydroberberine oxidase (530 aa).

Residues 1-24 form the signal peptide; the sequence is MSKMASSIFATFSLLSSLLPTSLA. Cys-36 and Cys-94 are joined by a disulfide. Asn-51 carries an N-linked (GlcNAc...) asparagine glycan. The 175-residue stretch at 72 to 246 folds into the FAD-binding PCMH-type domain; the sequence is TTPKPNFIVT…LAWKIRLVPV (175 aa). Positions 109-171 form a cross-link, 6-(S-cysteinyl)-8alpha-(pros-histidyl)-FAD (His-Cys); the sequence is HDFEGLSYVS…GVHAFPAGLC (63 aa). Residue Asn-483 is glycosylated (N-linked (GlcNAc...) asparagine).

Belongs to the oxygen-dependent FAD-linked oxidoreductase family. The cofactor is FAD. In terms of processing, the FAD cofactor is bound via a bicovalent 6-S-cysteinyl, 8alpha-N1-histidyl FAD linkage.

It carries out the reaction (S)-canadine + 2 O2 + H(+) = berberine + 2 H2O2. Functionally, catalyzes the oxidation of different tetrahydroprotoberberines, such as (S)-canadine, (S)-scoulerine and (S)-corypalmine. Catalyzes the oxidation of (S)-coreximine and (S)-tetrahydropalmatine. Catalyzes the oxidation of different 1-benzylisoquinoline alkaloids, such as (S)-norreticuline, (S)-nororientaline, (S)-coclaurine and (S)-norisoorientaline. Exhibits strict specificity for the (S)-enantiomer of tetrahydroprotoberbirines and 1-benzylisoquinoline alkaloids. The sequence is that of Tetrahydroberberine oxidase from Berberis wilsoniae (Mrs Wilson's barberry).